We begin with the raw amino-acid sequence, 205 residues long: Imidazoleglycerol-phosphate dehydratase (205 aa).

It belongs to the imidazoleglycerol-phosphate dehydratase family.

It carries out the reaction D-erythro-1-(imidazol-4-yl)glycerol 3-phosphate = 3-(imidazol-4-yl)-2-oxopropyl phosphate + H2O. Its pathway is amino-acid biosynthesis; L-histidine biosynthesis; L-histidine from 5-phospho-alpha-D-ribose 1-diphosphate: step 6/9. This is Imidazoleglycerol-phosphate dehydratase (HIS3) from Phaffia rhodozyma (Yeast).